Reading from the N-terminus, the 465-residue chain is Hepatocyte nuclear factor 6 (465 aa).

4 disordered regions span residues 17–55, 120–141, 264–290, and 442–465; these read SHEP…SMGM, DKFP…HQRL, LLGT…GQME, and DKWQ…CTKA. The span at 123-140 shows a compositional bias: basic residues; it reads PHHHHHHHHHHHPHHHQR. Over residues 273–288 the composition is skewed to polar residues; that stretch reads PSVTGAQVSNGSNSGQ. The CUT DNA-binding region spans 283–369; it reads GSNSGQMEEI…QRMSALRLAA (87 aa). The homeobox DNA-binding region spans 385–444; sequence PKKPRLVFTDVQRRTLHAIFKENKRPSKELQITISQQLGLELSTVSNFFMNARRRSLDKW. A compositionally biased stretch (low complexity) spans 448–465; it reads GSSNSGNSSSSSSTCTKA.

The protein belongs to the CUT homeobox family. Binds DNA as a monomer. In terms of tissue distribution, highly expressed in liver; lower expression in testis and skin.

It localises to the nucleus. Its function is as follows. Transcriptional activator. Binds the consensus sequence 5'-DHWATTGAYTWWD-3' on a variety of gene promoters such as those of HNF3B and TTR. Important for liver genes transcription. The polypeptide is Hepatocyte nuclear factor 6 (ONECUT1) (Homo sapiens (Human)).